The following is a 578-amino-acid chain: Longifolene synthase (578 aa).

D331, D335, and D475 together coordinate Mg(2+). The DDXXD motif motif lies at 331–335 (DDLYD).

It belongs to the terpene synthase family. Tpsd subfamily. Mg(2+) serves as cofactor. Requires Mn(2+) as cofactor.

It carries out the reaction (2E,6E)-farnesyl diphosphate = longifolene + diphosphate. The protein operates within sesquiterpene biosynthesis. Its pathway is terpene metabolism; oleoresin biosynthesis. In terms of biological role, terpene synthase (TPS) involved in the biosynthesis of sesquiterpene natural products included in conifer oleoresin secretions and volatile emissions; these compounds contribute to biotic and abiotic stress defense against herbivores and pathogens. Catalyzes the conversion of (2E,6E)-farnesyl diphosphate (FPP) to longifolene. This is Longifolene synthase from Picea engelmannii x Picea glauca (Hybrid white spruce).